A 142-amino-acid polypeptide reads, in one-letter code: MISKRKKKSDTKVYALGQHIRMSAHKARRVIDQIRGRSYEETLMILELMPYRACYPIFKLVYSAAANASHNMGFNETSLVVSKAEVNEGTTVKKFKPRARGRSYPIKRPTCHITIVLEDTTVYDEYVISHDTYSSGGLWDKK.

Belongs to the universal ribosomal protein uL22 family. In terms of assembly, part of the 50S ribosomal subunit.

The protein localises to the plastid. Its subcellular location is the chloroplast. This protein binds specifically to 23S rRNA. In terms of biological role, the globular domain of the protein is located near the polypeptide exit tunnel on the outside of the subunit, while an extended beta-hairpin is found that lines the wall of the exit tunnel in the center of the 70S ribosome. The chain is Large ribosomal subunit protein uL22c (rpl22) from Carica papaya (Papaya).